A 463-amino-acid polypeptide reads, in one-letter code: MYGNYSHFMKFPAGYGGSPGHTGSTSMSPSAALSTGKPMDSHPSYTDTPVSAPRTLSAVGTPLNALGSPYRVITSAMGPPSGALAAPPGINLVAPPSSQLNVVNSVSSSEDIKPLPGLPGIGNMNYPSTSPGSLVKHICAICGDRSSGKHYGVYSCEGCKGFFKRTIRKDLIYTCRDNKDCLIDKRQRNRCQYCRYQKCLVMGMKREAVQEERQRSRERAESEAECASSGHEDMPVERILEAELAVEPKTESYGDMNMENSTNDPVTNICHAADKQLFTLVEWAKRIPHFSDLTLEDQVILLRAGWNELLIASFSHRSVSVQDGILLATGLHVHRSSAHSAGVGSIFDRVLTELVSKMKDMQMDKSELGCLRAIVLFNPDAKGLSNPSEVETLREKVYATLEAYTKQKYPEQPGRFAKLLLRLPALRSIGLKCLEHLFFFKLIGDTPIDTFLMEMLETPLQIT.

Positions 1–138 are modulating; sequence MYGNYSHFMK…TSPGSLVKHI (138 aa). Positions 18–53 are disordered; it reads SPGHTGSTSMSPSAALSTGKPMDSHPSYTDTPVSAP. The span at 21–33 shows a compositional bias: polar residues; that stretch reads HTGSTSMSPSAAL. 2 consecutive NR C4-type zinc fingers follow at residues 139-159 and 175-194; these read CAICGDRSSGKHYGVYSCEGC and CRDNKDCLIDKRQRNRCQYC. Residues 139 to 204 constitute a DNA-binding region (nuclear receptor); that stretch reads CAICGDRSSG…RYQKCLVMGM (66 aa). Positions 205–230 are hinge; that stretch reads KREAVQEERQRSRERAESEAECASSG. Residues 211-222 show a composition bias toward basic and acidic residues; the sequence is EERQRSRERAES. A disordered region spans residues 211–232; it reads EERQRSRERAESEAECASSGHE. The NR LBD domain occupies 231–459; sequence HEDMPVERIL…TFLMEMLETP (229 aa).

This sequence belongs to the nuclear hormone receptor family. NR2 subfamily. Homodimer. Heterodimer with a RAR molecule. Binds DNA preferentially as a RAR/RXR heterodimer. Interacts with RARA. In terms of processing, acetylated by EP300.

The protein localises to the nucleus. It localises to the cytoplasm. In terms of biological role, receptor for retinoic acid. Retinoic acid receptors bind as heterodimers to their target response elements in response to their ligands, all-trans or 9-cis retinoic acid, and regulate gene expression in various biological processes. The RAR/RXR heterodimers bind to the retinoic acid response elements (RARE) composed of tandem 5'-AGGTCA-3' sites known as DR1-DR5. The high affinity ligand for RXRs is 9-cis retinoic acid. This Pongo abelii (Sumatran orangutan) protein is Retinoic acid receptor RXR-gamma (RXRG).